Reading from the N-terminus, the 307-residue chain is Ribosomal RNA small subunit methyltransferase H (307 aa).

Residues 33-35, Asp51, Phe82, Asp96, and Gln103 contribute to the S-adenosyl-L-methionine site; that span reads GGY.

Belongs to the methyltransferase superfamily. RsmH family.

The protein localises to the cytoplasm. It catalyses the reaction cytidine(1402) in 16S rRNA + S-adenosyl-L-methionine = N(4)-methylcytidine(1402) in 16S rRNA + S-adenosyl-L-homocysteine + H(+). In terms of biological role, specifically methylates the N4 position of cytidine in position 1402 (C1402) of 16S rRNA. The sequence is that of Ribosomal RNA small subunit methyltransferase H from Rickettsia peacockii (strain Rustic).